We begin with the raw amino-acid sequence, 171 residues long: Phosphopantetheine adenylyltransferase (171 aa).

T9 provides a ligand contact to substrate. ATP-binding positions include 9-10 (TF) and H17. Substrate-binding residues include K41, L73, and R87. ATP-binding positions include 88-90 (GLR), E98, and 123-129 (YQFISGT).

This sequence belongs to the bacterial CoaD family. Homohexamer. It depends on Mg(2+) as a cofactor.

Its subcellular location is the cytoplasm. The enzyme catalyses (R)-4'-phosphopantetheine + ATP + H(+) = 3'-dephospho-CoA + diphosphate. It functions in the pathway cofactor biosynthesis; coenzyme A biosynthesis; CoA from (R)-pantothenate: step 4/5. In terms of biological role, reversibly transfers an adenylyl group from ATP to 4'-phosphopantetheine, yielding dephospho-CoA (dPCoA) and pyrophosphate. In Paraburkholderia phytofirmans (strain DSM 17436 / LMG 22146 / PsJN) (Burkholderia phytofirmans), this protein is Phosphopantetheine adenylyltransferase.